A 123-amino-acid polypeptide reads, in one-letter code: Holo-[acyl-carrier-protein] synthase (123 aa).

Asp8 and Glu56 together coordinate Mg(2+).

Belongs to the P-Pant transferase superfamily. AcpS family. The cofactor is Mg(2+).

It localises to the cytoplasm. The enzyme catalyses apo-[ACP] + CoA = holo-[ACP] + adenosine 3',5'-bisphosphate + H(+). Its function is as follows. Transfers the 4'-phosphopantetheine moiety from coenzyme A to a Ser of acyl-carrier-protein. This chain is Holo-[acyl-carrier-protein] synthase, found in Treponema denticola (strain ATCC 35405 / DSM 14222 / CIP 103919 / JCM 8153 / KCTC 15104).